Consider the following 102-residue polypeptide: Small ribosomal subunit protein uS10 (102 aa).

This sequence belongs to the universal ribosomal protein uS10 family. As to quaternary structure, part of the 30S ribosomal subunit.

In terms of biological role, involved in the binding of tRNA to the ribosomes. In Thermoanaerobacter pseudethanolicus (strain ATCC 33223 / 39E) (Clostridium thermohydrosulfuricum), this protein is Small ribosomal subunit protein uS10.